The sequence spans 1304 residues: MDQQEPSNNVDTSSILSDDGMETQEQSSFVTATIDLTVDDYDETEIQEILDNGKAEEGTDEDSDLVEGILNANSDVQALLDAPSEQVAQALNSFFGNESEQEAVAAQRRVDAEKTAKDEAELKQQEEAEDLIIEDSIVKTDEEKQAVRRLKINEFLSWFTRLLPEQFKNFEFTNPNYLTESISDSPVVNVDKCKEIVKSFKESESLEGLSQKYELIDEDVLVAAICIGVLDTNNEEDVDFNVLCDDRIDDWSIEKCVTFLDYPNTGLNSKNGPLRFMQFTVTSPASAILMLTLIRLREEGHPCRLDFDSNPTDDLLLNFDQVEFSNNIIDTAVKYWDDQKENGAQDKIGRELNDFFHEIESTSAEFKQHFENAVGSRNEIIQLVNEKIPDFDGTEAAVNESFTSDQRTEIINSRAIMETLKAEMKLAIAEAQKVYDTKTDFEKFFVLTVGDFCLARANPSDDAELTYAIVQDRVDAMTYKVKFIDTSQIRECNIRDLAMTTQGMYDPSLNTFGDVGLRVACRQVISSSQFGKKTIWLTGTAAGRRRAHRSDFLIFFDNGTDAYVSAPTMPGEPGYEVASEKKSVFSLKEMIAKMNAAQIAIMVGQPVGKEGNLDYFLTFHWIRQSHRSAYIRDFMKEFPEWPLLKMPVGMRICLYNSLVDRRKKMVTVIGTDRAFAIVRHEAPNPLAPGNRCTDFPCNDRNHQHIDEKIYRGSHRLEGAAHKKHMISTNNNLSQRRKDQLQSQFEPTDMIRSMPERNHQQVVKKKTTGTNQNVASTNDAKSKREIEIRKKNQFLFNKIIVPIPVLTPLENLKAHAQCGPDCLQKMDADPYEARFHRNSPIHTPLLCGWRRIMYTMSTGKKRGAVKKNIIYFSPCGAALHQISDVSEYIHVTRSLLTIDCFSFDARIDTATYITVDDKYLKVADFSLGTEGIPIPLVNSVDNDEPPSLEYSKRRFQYNDQVDISSVSRDFCSGCSCDGDCSDASKCECQQLSIEAMKRLPHNLQFDGHDELVPHYQNRLLSSKVISGLYECNDQCSCHRKSCYNRVVQNNIKYPMHIFKTAQSGWGVRALTDIPQSTFICTYVGAILTDDLADELRNADQYFADLDLKDTVELEKGREDHETDFGYGGDESDYDDEEGSDGDSGDDVMNKMVKRQDSSESGEETKRLTRQKRKQSKKSGKGGSVEKDDTTPRDSMEKDNIESKDEPVFNWDKYFEPFPLYVIDAKQRGNLGRFLNHSCDPNVHVQHVMYDTHDLRLPWVAFFTRKYVKAGDELTWDYQYTQDQTATTQLTCHCGAENCTGRLLKS.

The span at 1–16 (MDQQEPSNNVDTSSIL) shows a compositional bias: polar residues. Residues 1 to 31 (MDQQEPSNNVDTSSILSDDGMETQEQSSFVT) form a disordered region. Residues 97–129 (NESEQEAVAAQRRVDAEKTAKDEAELKQQEEAE) adopt a coiled-coil conformation. One can recognise an MBD domain in the interval 834–909 (FHRNSPIHTP…FSFDARIDTA (76 aa)). Positions 971 to 1049 (SGCSCDGDCS…SCYNRVVQNN (79 aa)) constitute a Pre-SET domain. Residues Cys-973, Cys-975, Cys-979, Cys-985, Cys-987, Cys-1030, Cys-1034, Cys-1036, and Cys-1041 each coordinate Zn(2+). Positions 1052–1277 (YPMHIFKTAQ…AGDELTWDYQ (226 aa)) constitute an SET domain. S-adenosyl-L-methionine contacts are provided by residues 1062–1064 (SGW), Asp-1098, and Tyr-1100. Positions 1113–1122 (EKGREDHETD) are enriched in basic and acidic residues. Positions 1113–1201 (EKGREDHETD…DSMEKDNIES (89 aa)) are disordered. Residues 1128–1144 (DESDYDDEEGSDGDSGD) are compositionally biased toward acidic residues. Residues 1152–1165 (KRQDSSESGEETKR) are compositionally biased toward basic and acidic residues. A compositionally biased stretch (basic residues) spans 1166-1178 (LTRQKRKQSKKSG). Over residues 1182-1201 (SVEKDDTTPRDSMEKDNIES) the composition is skewed to basic and acidic residues. S-adenosyl-L-methionine contacts are provided by residues Arg-1231 and 1234–1235 (NH). Zn(2+) is bound by residues Cys-1237, Cys-1290, Cys-1292, and Cys-1297. The Post-SET domain occupies 1286 to 1302 (TQLTCHCGAENCTGRLL).

This sequence belongs to the class V-like SAM-binding methyltransferase superfamily.

The protein resides in the nucleus. It localises to the chromosome. The protein localises to the cytoplasm. The catalysed reaction is N(6)-methyl-L-lysyl(9)-[histone H3] + S-adenosyl-L-methionine = N(6),N(6)-dimethyl-L-lysyl(9)-[histone H3] + S-adenosyl-L-homocysteine + H(+). It carries out the reaction L-lysyl(9)-[histone H3] + S-adenosyl-L-methionine = N(6)-methyl-L-lysyl(9)-[histone H3] + S-adenosyl-L-homocysteine + H(+). Its function is as follows. Histone methyltransferase which is required for the mono- and dimethylation of 'Lys-9' of histone H3. This increases the efficiency of set-25-mediated trimethylation of histone H3 'Lys-9'. Involved in the transcriptional repression of lin-3 which is required for the negative regulation of vulval cell fate specification during postembryonic development. Has a role in blocking checkpoint signaling and mediating the transcriptional silencing of meiotic sex chromosome inactivation; a mechanism which enables checkpoint proteins to distinguish between the partnerless male X chromosome and asynapsed chromosomes thereby shielding the lone X from inappropriate activation of an apoptotic program. Operates redundantly with set-25 to position chromatin at the nuclear periphery. Required for small-RNA-induced H3K9 methylation. Together with set-25, protects and stabilizes repeat-rich genomic regions by suppressing transcription-induced replication stress through methylation of H3K9. Together with spr-5, required for transgenerational fertility. The polypeptide is Histone-lysine N-methyltransferase met-2 (met-2) (Caenorhabditis elegans).